A 67-amino-acid chain; its full sequence is MPKMKTKSSAKKRFKITATGKVKAAAAGKRHGMIKRSNKFIRDARGTMVLAEPDGRKVIKNYLPNGL.

It belongs to the bacterial ribosomal protein bL35 family.

The polypeptide is Large ribosomal subunit protein bL35 (Rhizobium johnstonii (strain DSM 114642 / LMG 32736 / 3841) (Rhizobium leguminosarum bv. viciae)).